A 345-amino-acid chain; its full sequence is Phosphoribosylformylglycinamidine cyclo-ligase (345 aa).

The protein belongs to the AIR synthase family.

The protein localises to the cytoplasm. The enzyme catalyses 2-formamido-N(1)-(5-O-phospho-beta-D-ribosyl)acetamidine + ATP = 5-amino-1-(5-phospho-beta-D-ribosyl)imidazole + ADP + phosphate + H(+). Its pathway is purine metabolism; IMP biosynthesis via de novo pathway; 5-amino-1-(5-phospho-D-ribosyl)imidazole from N(2)-formyl-N(1)-(5-phospho-D-ribosyl)glycinamide: step 2/2. The polypeptide is Phosphoribosylformylglycinamidine cyclo-ligase (Histophilus somni (strain 2336) (Haemophilus somnus)).